Consider the following 725-residue polypeptide: Consortin (725 aa).

5 disordered regions span residues 1-72 (MDDS…LNNN), 103-124 (GKDK…AKKI), 296-353 (LLVS…SLSV), 375-397 (TQSS…CEDD), and 485-510 (QQPD…ENVL). The Cytoplasmic portion of the chain corresponds to 1 to 664 (MDDSDTPTYY…LDQDEVGGGS (664 aa)). A compositionally biased stretch (polar residues) spans 63 to 72 (VSEQDSLNNN). The segment covering 109-121 (PGKRSPRSKKGTA) has biased composition (basic residues). Positions 300-314 (EDPKEGGATTKESES) are enriched in basic and acidic residues. 2 stretches are compositionally biased toward polar residues: residues 343–353 (DVQTDSPSLSV) and 375–388 (TQSS…SGPD). Residues 665 to 685 (CILLVLLCIATVFLSVGGTAL) traverse the membrane as a helical segment. At 686 to 725 (YCTFGDMESPVCTDFADNMDFYYTKLLQGVAELKHWIYLS) the chain is on the extracellular side.

This sequence belongs to the CNST family. Interacts with connexins GJA1/CX43, GJB1/CX32, GJB2/CX26, GJB3/CX31, GJB6/CX30 and GJC1/CX45. Also interacts with GGA1 and GGA2. Does not interact with PANX1.

The protein localises to the cell membrane. It localises to the golgi apparatus. It is found in the trans-Golgi network membrane. The protein resides in the cytoplasmic vesicle. Its subcellular location is the secretory vesicle. Its function is as follows. Required for targeting of connexins to the plasma membrane. The protein is Consortin (CNST) of Homo sapiens (Human).